The sequence spans 293 residues: Ribosomal RNA small subunit methyltransferase H (293 aa).

Residues 32-34 (GGH), D51, F78, D99, and Q106 contribute to the S-adenosyl-L-methionine site. A disordered region spans residues 272-293 (SDEEIKENPASRSAKLRVGRRI).

This sequence belongs to the methyltransferase superfamily. RsmH family.

It localises to the cytoplasm. The catalysed reaction is cytidine(1402) in 16S rRNA + S-adenosyl-L-methionine = N(4)-methylcytidine(1402) in 16S rRNA + S-adenosyl-L-homocysteine + H(+). Functionally, specifically methylates the N4 position of cytidine in position 1402 (C1402) of 16S rRNA. The sequence is that of Ribosomal RNA small subunit methyltransferase H from Sulfurihydrogenibium sp. (strain YO3AOP1).